Here is a 328-residue protein sequence, read N- to C-terminus: MCDALKSIKKIKKEIQRTTTVEELKTLRIKYLGKKGYLASKMQKLFSLSLDKKKIYGSIINKFKSDLNIELDLHKKILDMIAVSSLNKKEKNFDVSLISRKNDIGTIHPITYVISSIENFFLKLGFSVITGFEIDDDYHNFDLLNIPKYHPARADHDTFWFDANRLLRTQTSNMQIRTMKNETPPIKIIVPGKVYRNDYDATHTPMFHQVEGLIVDHDVNFFHLKWIIEMFLKFFFNKTVKIRFKSSYFPFTVLSAEVDILGNNKKWLEVLGCGMIHPKVLSNANINPKMYSGCAFGIGVERITMLRYGISDIRVFYENNLKFLTQFK.

It belongs to the class-II aminoacyl-tRNA synthetase family. Phe-tRNA synthetase alpha subunit type 1 subfamily. As to quaternary structure, tetramer of two alpha and two beta subunits. It depends on Mg(2+) as a cofactor.

The protein resides in the cytoplasm. The enzyme catalyses tRNA(Phe) + L-phenylalanine + ATP = L-phenylalanyl-tRNA(Phe) + AMP + diphosphate + H(+). The sequence is that of Phenylalanine--tRNA ligase alpha subunit from Buchnera aphidicola subsp. Baizongia pistaciae (strain Bp).